A 353-amino-acid chain; its full sequence is Forkhead box protein I3-A (353 aa).

Positions 116–210 (RPPYSYSALI…DNGNFRRKRK (95 aa)) form a DNA-binding region, fork-head. Residues 201–255 (DNGNFRRKRKRKSDSLAEEEGKGYSGSDSALSSPKNPSDSSERGNSPISTDQAPC) are disordered. The Nuclear localization signal motif lies at 206-212 (RRKRKRK). The segment covering 213-222 (SDSLAEEEGK) has biased composition (basic and acidic residues). The span at 226–252 (GSDSALSSPKNPSDSSERGNSPISTDQ) shows a compositional bias: polar residues.

Expressed in ionocyte precursors.

Its subcellular location is the nucleus. Functionally, transcription factor required for epithelial cell differentiation. Involved in specification of skin ionocytes from epidermal precursors. This chain is Forkhead box protein I3-A, found in Danio rerio (Zebrafish).